The primary structure comprises 111 residues: MRKIARLLNWVSIDLLILVECFHQKGLLHHRLSLLVQQHLLHRDEVGYDGYYDELCSYYTAILHPRPPLHRLRHHHYSGVDSLPLSNAMTVTLTVPPLHVVVCRLHFSLPV.

This is an uncharacterized protein from Saccharomyces cerevisiae (strain ATCC 204508 / S288c) (Baker's yeast).